The following is a 785-amino-acid chain: B-cell scaffold protein with ankyrin repeats (785 aa).

The interval methionine 1–isoleucine 154 is interaction with ITPR2. Residues asparagine 25–isoleucine 153 enclose the TIR domain. Residues valine 200–leucine 327 form the DBB domain. ANK repeat units follow at residues glutamate 342–alanine 371 and glutamate 378–isoleucine 408. Disordered stretches follow at residues proline 433 to serine 480, glycine 493 to proline 514, glutamine 538 to tyrosine 578, and phenylalanine 606 to glutamate 625. Residues glutamate 553–glutamate 568 are compositionally biased toward basic and acidic residues. Residues lysine 569–tyrosine 578 show a composition bias toward acidic residues. Residues proline 611 to isoleucine 621 show a composition bias toward pro residues.

In terms of assembly, interacts with LYN, ITPR1 and ITPR2. Post-translationally, phosphorylated on tyrosines upon BCR activation. Expressed in B-cell but not T-cell or myeloid cell lines. Highest expression in CD19(+) B-cells, with very low expression in other cell populations.

Its function is as follows. Involved in B-cell receptor (BCR)-induced Ca(2+) mobilization from intracellular stores. Promotes Lyn-mediated phosphorylation of IP3 receptors 1 and 2. This Homo sapiens (Human) protein is B-cell scaffold protein with ankyrin repeats (BANK1).